The sequence spans 357 residues: tRNA N6-adenosine threonylcarbamoyltransferase (357 aa).

The Fe cation site is built by histidine 119 and histidine 123. Substrate-binding positions include 141–145 (LISGG), aspartate 174, glycine 187, and asparagine 284. Aspartate 312 lines the Fe cation pocket.

The protein belongs to the KAE1 / TsaD family. Fe(2+) serves as cofactor.

It localises to the cytoplasm. The enzyme catalyses L-threonylcarbamoyladenylate + adenosine(37) in tRNA = N(6)-L-threonylcarbamoyladenosine(37) in tRNA + AMP + H(+). Functionally, required for the formation of a threonylcarbamoyl group on adenosine at position 37 (t(6)A37) in tRNAs that read codons beginning with adenine. Is involved in the transfer of the threonylcarbamoyl moiety of threonylcarbamoyl-AMP (TC-AMP) to the N6 group of A37, together with TsaE and TsaB. TsaD likely plays a direct catalytic role in this reaction. The polypeptide is tRNA N6-adenosine threonylcarbamoyltransferase (Pelagibacter ubique (strain HTCC1062)).